We begin with the raw amino-acid sequence, 122 residues long: MIQMQTNLDVADNSGARRVMCIKVIGGSKRRYATVGDVIVVSIKEAIPRGKVKKGDVMKAVVVRVRKDIRRADGSVIRFDRNAAVLINNQSEPIGTRIFGPVPRELRAKNHMKIISLAPEVL.

Forms a cluster with proteins L3 and L19. In the 70S ribosome, L14 and L19 interact and together make contacts with the 16S rRNA in bridges B5 and B8. Part of the 50S ribosomal subunit.

Its function is as follows. Binds to 23S rRNA. Forms part of two intersubunit bridges in the 70S ribosome. This is Large ribosomal subunit protein uL14 from Rhodopseudomonas palustris (strain ATCC BAA-98 / CGA009).